The chain runs to 124 residues: uncharacterized protein (124 aa).

This is an uncharacterized protein from Schizosaccharomyces pombe (strain 972 / ATCC 24843) (Fission yeast).